We begin with the raw amino-acid sequence, 244 residues long: Probable transcriptional regulatory protein DMR_30850 (244 aa).

The protein belongs to the TACO1 family.

It localises to the cytoplasm. The protein is Probable transcriptional regulatory protein DMR_30850 of Solidesulfovibrio magneticus (strain ATCC 700980 / DSM 13731 / RS-1) (Desulfovibrio magneticus).